The primary structure comprises 145 residues: 3-hydroxyacyl-[acyl-carrier-protein] dehydratase FabZ (145 aa).

The active site involves histidine 47.

The protein belongs to the thioester dehydratase family. FabZ subfamily.

Its subcellular location is the cytoplasm. The enzyme catalyses a (3R)-hydroxyacyl-[ACP] = a (2E)-enoyl-[ACP] + H2O. In terms of biological role, involved in unsaturated fatty acids biosynthesis. Catalyzes the dehydration of short chain beta-hydroxyacyl-ACPs and long chain saturated and unsaturated beta-hydroxyacyl-ACPs. The sequence is that of 3-hydroxyacyl-[acyl-carrier-protein] dehydratase FabZ from Geotalea uraniireducens (strain Rf4) (Geobacter uraniireducens).